The chain runs to 272 residues: MNTPQDSSLGREVSYPSQYDPGLLFPIPRSGARAEIGLDDAALPFVGHDRWHAFELSWLDPRGKPQVAVATVQVPCTSPRLIESKSFKLYLNSLNSTRIDSAEALRARIVADLSDCAGAPVQVEFGLPGLRETPLGESIDGLELEIDCYGPPQADFLSANAGEVVEETLVSALLKSNCPVTGQPDWATVSLRYRGPKIDRAGLLRYLVSYREHAEFHEQCVERIFSEVSARCQPQWLEVEARYTRRGGLDINPWRASPGIAAPAATYRELRQ.

82–84 (IES) provides a ligand contact to substrate. An NADPH-binding site is contributed by 84 to 85 (SK). The active-site Thioimide intermediate is the cysteine 178. The active-site Proton donor is aspartate 185. Residue 217–218 (HE) coordinates substrate. Residue 246-247 (RG) participates in NADPH binding.

Belongs to the GTP cyclohydrolase I family. QueF type 2 subfamily. As to quaternary structure, homodimer.

It is found in the cytoplasm. It catalyses the reaction 7-aminomethyl-7-carbaguanine + 2 NADP(+) = 7-cyano-7-deazaguanine + 2 NADPH + 3 H(+). It functions in the pathway tRNA modification; tRNA-queuosine biosynthesis. Catalyzes the NADPH-dependent reduction of 7-cyano-7-deazaguanine (preQ0) to 7-aminomethyl-7-deazaguanine (preQ1). The polypeptide is NADPH-dependent 7-cyano-7-deazaguanine reductase (Stenotrophomonas maltophilia (strain K279a)).